A 211-amino-acid polypeptide reads, in one-letter code: Putative ATP-dependent Clp protease proteolytic subunit-like (211 aa).

The segment at 1–24 (MTRPSARHVLPEFTERTSAGTRTS) is disordered. H129 is a catalytic residue.

Belongs to the peptidase S14 family.

Functionally, has lost one of the conserved residue (Ser) proposed to be part of the active site. Therefore it could be inactive. The sequence is that of Putative ATP-dependent Clp protease proteolytic subunit-like from Streptomyces coelicolor (strain ATCC BAA-471 / A3(2) / M145).